A 366-amino-acid polypeptide reads, in one-letter code: Caffeic acid 3-O-methyltransferase (366 aa).

A substrate-binding site is contributed by 131–137; the sequence is MNQDKIL. A substrate binding region spans residues 163 to 181; that stretch reads AFEYHGTDPRFNKIFNRGM. Residues Gly-209, Asp-232, Asp-252, Met-253, and Lys-266 each contribute to the S-adenosyl-L-methionine site. The active-site Proton acceptor is the His-270.

The protein belongs to the class I-like SAM-binding methyltransferase superfamily. Cation-independent O-methyltransferase family. COMT subfamily. As to quaternary structure, homodimer.

It catalyses the reaction (E)-caffeate + S-adenosyl-L-methionine = (E)-ferulate + S-adenosyl-L-homocysteine + H(+). It participates in aromatic compound metabolism; phenylpropanoid biosynthesis. Catalyzes the conversion of caffeic acid to ferulic acid and of 5-hydroxyferulic acid to sinapic acid. The resulting products may subsequently be converted to the corresponding alcohols that are incorporated into lignins. This Eucalyptus gunnii (Cider gum) protein is Caffeic acid 3-O-methyltransferase (OMT).